The primary structure comprises 235 residues: MCHDTAPALFPRTASTGSIDGAICALCYAGATRGPRLLVLPDIYGCNAFYRGYAAYLAEQGAGEVLLVDPFAAFGELATVTREAAFQRRHRLADRAYVEELIDFIDGQRIEGVVGFCLGGLFVFELARQQVVSRLVAYYPFPQGLENRDPLDVPFDYLPALRSRHTVIVGDDDALLGTQNLQRLQAQARANDAIDLHIMNGAGHGFLADLESPDTARAAVAKRGLRIGTTTLLGG.

Residues cysteine 117, aspartate 173, and histidine 204 contribute to the active site.

The protein belongs to the dienelactone hydrolase family. In terms of assembly, monomer.

The catalysed reaction is 2-(5-oxo-2,5-dihydrofuran-2-ylidene)acetate + H2O = 4-oxohex-2-enedioate + H(+). It functions in the pathway aromatic compound metabolism; 3-chlorocatechol degradation. Functionally, ring cleavage of cyclic ester dienelactone to produce maleylacetate. In Cupriavidus pinatubonensis (strain JMP 134 / LMG 1197) (Cupriavidus necator (strain JMP 134)), this protein is Carboxymethylenebutenolidase 2 (tfdEII).